We begin with the raw amino-acid sequence, 309 residues long: Porphobilinogen deaminase (309 aa).

Cys-240 carries the post-translational modification S-(dipyrrolylmethanemethyl)cysteine.

It belongs to the HMBS family. Monomer. Dipyrromethane serves as cofactor.

The catalysed reaction is 4 porphobilinogen + H2O = hydroxymethylbilane + 4 NH4(+). It functions in the pathway porphyrin-containing compound metabolism; protoporphyrin-IX biosynthesis; coproporphyrinogen-III from 5-aminolevulinate: step 2/4. Functionally, tetrapolymerization of the monopyrrole PBG into the hydroxymethylbilane pre-uroporphyrinogen in several discrete steps. This is Porphobilinogen deaminase from Chromobacterium violaceum (strain ATCC 12472 / DSM 30191 / JCM 1249 / CCUG 213 / NBRC 12614 / NCIMB 9131 / NCTC 9757 / MK).